The sequence spans 322 residues: Protein-L-isoaspartate O-methyltransferase (322 aa).

Residues 1–101 form a disordered region; that stretch reads MSGERAKRFP…AKQGDRSAAP (101 aa). Positions 14–29 are enriched in basic and acidic residues; that stretch reads EDLKREPRKPEGRVAE. 2 stretches are compositionally biased toward low complexity: residues 33 to 51 and 76 to 91; these read AGDAARQRLTAAAAVPAAA and HAPAAPGAAKRAPQGG. S170 is an active-site residue.

The protein belongs to the methyltransferase superfamily. L-isoaspartyl/D-aspartyl protein methyltransferase family.

The protein localises to the cytoplasm. The enzyme catalyses [protein]-L-isoaspartate + S-adenosyl-L-methionine = [protein]-L-isoaspartate alpha-methyl ester + S-adenosyl-L-homocysteine. Its function is as follows. Catalyzes the methyl esterification of L-isoaspartyl residues in peptides and proteins that result from spontaneous decomposition of normal L-aspartyl and L-asparaginyl residues. It plays a role in the repair and/or degradation of damaged proteins. The polypeptide is Protein-L-isoaspartate O-methyltransferase (Burkholderia mallei (strain NCTC 10247)).